Consider the following 149-residue polypeptide: Nucleoside diphosphate kinase (149 aa).

K9, F57, R85, T91, R102, and N112 together coordinate ATP. Residue H115 is the Pros-phosphohistidine intermediate of the active site.

It belongs to the NDK family. Homotetramer. It depends on Mg(2+) as a cofactor.

Its subcellular location is the cytoplasm. The enzyme catalyses dZDP + ATP = dZTP + ADP. It carries out the reaction a 2'-deoxyribonucleoside 5'-diphosphate + ATP = a 2'-deoxyribonucleoside 5'-triphosphate + ADP. It catalyses the reaction a ribonucleoside 5'-diphosphate + ATP = a ribonucleoside 5'-triphosphate + ADP. It functions in the pathway purine metabolism. Major role in the synthesis of nucleoside triphosphates other than ATP. The ATP gamma phosphate is transferred to the NDP beta phosphate via a ping-pong mechanism, using a phosphorylated active-site intermediate. In terms of biological role, (Microbial infection) Catalyzes the phosphorylation of dZDP to dZTP, when the bacterium is infected by a phage that produces the substrate for the synthesis of dZTP (2- amino-2'-deoxyadenosine 5'-triphosphate), which is then used by the phage as a DNA polymerase substrate. The protein is Nucleoside diphosphate kinase of Picosynechococcus sp. (strain ATCC 27264 / PCC 7002 / PR-6) (Agmenellum quadruplicatum).